The primary structure comprises 478 residues: GMP reductase (478 aa).

CBS domains lie at 95–152 (VVDT…VRDI) and 153–211 (ALSD…AVDA). NADP(+) is bound by residues 245–247 (DTA) and 295–297 (GVG). C302 (thioimidate intermediate) is an active-site residue.

Belongs to the IMPDH/GMPR family. GuaB1 subfamily. Homooctamer composed of two tetramers. The oligomerization state is regulated by ligands and pH. Requires a monovalent cation as cofactor.

The enzyme catalyses IMP + NH4(+) + NADP(+) = GMP + NADPH + 2 H(+). Its pathway is purine metabolism; IMP biosynthesis via salvage pathway. With respect to regulation, activity is allosterically regulated by the ATP/GTP ratio in a pH-dependent manner. At pH 7.8, GTP has only a minor positive effect and ATP only a minor negative effect on the activity, however, at lower pH values, the effects of ATP and GTP increase. ATP-dependent inhibition can be restored by increasing GTP concentration. IMP and XMP are competitive inhibitors. Functionally, involved in the purine-salvage pathway. Catalyzes the NADPH-dependent conversion of GMP to IMP. Is not essential for viability, but may contribute to the regulation of the purine nucleotide pool by recycling GMP to IMP. The polypeptide is GMP reductase (Mycolicibacterium smegmatis (strain ATCC 700084 / mc(2)155) (Mycobacterium smegmatis)).